Reading from the N-terminus, the 242-residue chain is Protein CDV3 homolog B (242 aa).

The segment covering Met-1 to Lys-15 has biased composition (basic and acidic residues). Positions Met-1 to Gln-242 are disordered. Ala-2 carries the post-translational modification N-acetylalanine. Residues Ala-30–Lys-57 show a composition bias toward low complexity. Residues Val-59 to Glu-75 show a composition bias toward basic and acidic residues. Residues Lys-105–Glu-122 show a composition bias toward acidic residues. Composition is skewed to polar residues over residues Asp-129 to Ala-143 and Ser-183 to Ala-194. The span at Lys-195 to Lys-213 shows a compositional bias: basic and acidic residues.

The protein belongs to the CDV3 family.

Its subcellular location is the cytoplasm. The polypeptide is Protein CDV3 homolog B (cdv3-b) (Xenopus laevis (African clawed frog)).